The sequence spans 261 residues: tRNA U34 carboxymethyltransferase (261 aa).

Carboxy-S-adenosyl-L-methionine contacts are provided by residues lysine 25, tryptophan 39, lysine 44, glycine 63, 114 to 115 (VE), tyrosine 135, and arginine 250.

The protein belongs to the class I-like SAM-binding methyltransferase superfamily. CmoB family. Homotetramer.

The catalysed reaction is carboxy-S-adenosyl-L-methionine + 5-hydroxyuridine(34) in tRNA = 5-carboxymethoxyuridine(34) in tRNA + S-adenosyl-L-homocysteine + H(+). Its function is as follows. Catalyzes carboxymethyl transfer from carboxy-S-adenosyl-L-methionine (Cx-SAM) to 5-hydroxyuridine (ho5U) to form 5-carboxymethoxyuridine (cmo5U) at position 34 in tRNAs. This chain is tRNA U34 carboxymethyltransferase, found in Helicobacter pylori (strain Shi470).